The chain runs to 293 residues: uncharacterized protein (293 aa).

This is an uncharacterized protein from Mycobacterium tuberculosis (strain CDC 1551 / Oshkosh).